A 501-amino-acid chain; its full sequence is Putative lon protease homolog (501 aa).

53-60 (GPPGIGKS) is an ATP binding site. Residues 481 to 494 (SSSQRMSQHGYSSE) are compositionally biased toward polar residues. The tract at residues 481–501 (SSSQRMSQHGYSSENIDRSYM) is disordered.

The protein belongs to the peptidase S16 family.

This is Putative lon protease homolog from Methanothermobacter thermautotrophicus (strain ATCC 29096 / DSM 1053 / JCM 10044 / NBRC 100330 / Delta H) (Methanobacterium thermoautotrophicum).